We begin with the raw amino-acid sequence, 246 residues long: Orotidine 5'-phosphate decarboxylase (246 aa).

Substrate contacts are provided by residues Asp22, Lys44, 71-80, Thr130, Arg191, Gln201, Gly221, and Arg222; that span reads DLKYHDIPHT. Lys73 serves as the catalytic Proton donor.

This sequence belongs to the OMP decarboxylase family. Type 1 subfamily. In terms of assembly, homodimer.

The catalysed reaction is orotidine 5'-phosphate + H(+) = UMP + CO2. The protein operates within pyrimidine metabolism; UMP biosynthesis via de novo pathway; UMP from orotate: step 2/2. In terms of biological role, catalyzes the decarboxylation of orotidine 5'-monophosphate (OMP) to uridine 5'-monophosphate (UMP). The sequence is that of Orotidine 5'-phosphate decarboxylase from Neisseria meningitidis serogroup B (strain ATCC BAA-335 / MC58).